Here is a 184-residue protein sequence, read N- to C-terminus: Ribosome-recycling factor (184 aa).

The tract at residues 137 to 158 (DSIKAKQKDGIPEDEAKRGQDE) is disordered.

It belongs to the RRF family.

It is found in the cytoplasm. Its function is as follows. Responsible for the release of ribosomes from messenger RNA at the termination of protein biosynthesis. May increase the efficiency of translation by recycling ribosomes from one round of translation to another. The polypeptide is Ribosome-recycling factor (Desulforamulus reducens (strain ATCC BAA-1160 / DSM 100696 / MI-1) (Desulfotomaculum reducens)).